The primary structure comprises 645 residues: Acetyl-coenzyme A synthetase (645 aa).

CoA contacts are provided by residues 190–193 (RGSK), Thr-308, and Asn-332. Residues 384 to 386 (GEP), 408 to 413 (DTWWQT), Asp-497, and Arg-512 contribute to the ATP site. Residue Ser-520 coordinates CoA. Arg-523 provides a ligand contact to ATP. Val-534, His-536, and Val-539 together coordinate Mg(2+). A CoA-binding site is contributed by Arg-581. At Lys-606 the chain carries N6-acetyllysine.

Belongs to the ATP-dependent AMP-binding enzyme family. It depends on Mg(2+) as a cofactor. Post-translationally, acetylated. Deacetylation by the SIR2-homolog deacetylase activates the enzyme.

The enzyme catalyses acetate + ATP + CoA = acetyl-CoA + AMP + diphosphate. In terms of biological role, catalyzes the conversion of acetate into acetyl-CoA (AcCoA), an essential intermediate at the junction of anabolic and catabolic pathways. AcsA undergoes a two-step reaction. In the first half reaction, AcsA combines acetate with ATP to form acetyl-adenylate (AcAMP) intermediate. In the second half reaction, it can then transfer the acetyl group from AcAMP to the sulfhydryl group of CoA, forming the product AcCoA. This is Acetyl-coenzyme A synthetase from Bdellovibrio bacteriovorus (strain ATCC 15356 / DSM 50701 / NCIMB 9529 / HD100).